A 342-amino-acid chain; its full sequence is S-adenosylmethionine:tRNA ribosyltransferase-isomerase (342 aa).

It belongs to the QueA family. As to quaternary structure, monomer.

It is found in the cytoplasm. The catalysed reaction is 7-aminomethyl-7-carbaguanosine(34) in tRNA + S-adenosyl-L-methionine = epoxyqueuosine(34) in tRNA + adenine + L-methionine + 2 H(+). Its pathway is tRNA modification; tRNA-queuosine biosynthesis. Functionally, transfers and isomerizes the ribose moiety from AdoMet to the 7-aminomethyl group of 7-deazaguanine (preQ1-tRNA) to give epoxyqueuosine (oQ-tRNA). This chain is S-adenosylmethionine:tRNA ribosyltransferase-isomerase, found in Moorella thermoacetica (strain ATCC 39073 / JCM 9320).